The primary structure comprises 80 residues: MKKDIHPEYRPVVFMDTSTGYQFLSGSTKTSKETVEFEGETYPLIRVEISSDSHPFYTGRQKFTQADGRVDRFNKKYGLK.

This sequence belongs to the bacterial ribosomal protein bL31 family. Type B subfamily. In terms of assembly, part of the 50S ribosomal subunit.

The chain is Large ribosomal subunit protein bL31B from Streptococcus mutans serotype c (strain ATCC 700610 / UA159).